The primary structure comprises 382 residues: 1-deoxy-D-xylulose 5-phosphate reductoisomerase (382 aa).

Positions 10, 11, 12, 13, 36, and 122 each coordinate NADPH. Lys123 is a 1-deoxy-D-xylulose 5-phosphate binding site. Glu124 serves as a coordination point for NADPH. Mn(2+) is bound at residue Asp148. Residues Ser149, Glu150, Ser174, and His197 each coordinate 1-deoxy-D-xylulose 5-phosphate. A Mn(2+)-binding site is contributed by Glu150. Residue Gly203 coordinates NADPH. 4 residues coordinate 1-deoxy-D-xylulose 5-phosphate: Ser210, Asn215, Lys216, and Glu219. Glu219 serves as a coordination point for Mn(2+).

This sequence belongs to the DXR family. The cofactor is Mg(2+). It depends on Mn(2+) as a cofactor.

The enzyme catalyses 2-C-methyl-D-erythritol 4-phosphate + NADP(+) = 1-deoxy-D-xylulose 5-phosphate + NADPH + H(+). The protein operates within isoprenoid biosynthesis; isopentenyl diphosphate biosynthesis via DXP pathway; isopentenyl diphosphate from 1-deoxy-D-xylulose 5-phosphate: step 1/6. Its function is as follows. Catalyzes the NADPH-dependent rearrangement and reduction of 1-deoxy-D-xylulose-5-phosphate (DXP) to 2-C-methyl-D-erythritol 4-phosphate (MEP). The chain is 1-deoxy-D-xylulose 5-phosphate reductoisomerase from Chlorobium chlorochromatii (strain CaD3).